The following is a 247-amino-acid chain: MVDREQLVQKARLAEQAERYDDMAAAMKNVTELNEPLSNEERNLLSVAYKNVVGARRSSWRVISSIEQKTSADGNEKKIEMVRAYREKIEKELGAVCQDVLSLLDNYLIKNCSETQYESKVFYLKMKGDYYRYLAEVATGEKRATVVESSEKAYSEAHEISKEHMQPTHPIRLGLALNYSVFYYEIQNAPEQACHLAKTAFDDAIAELDTLNEDSYKDSTLIMQLLRDNLTLWTSDQQDDDGGEGNN.

This sequence belongs to the 14-3-3 family. Homodimer, and heterodimer with other family members.

It localises to the cytoplasm. Functionally, adapter protein implicated in the regulation of a large spectrum of both general and specialized signaling pathways. Binds to a large number of partners, usually by recognition of a phosphoserine or phosphothreonine motif. Binding generally results in the modulation of the activity of the binding partner. The protein is 14-3-3 protein gamma (YWHAG) of Gallus gallus (Chicken).